A 1298-amino-acid polypeptide reads, in one-letter code: MLILRGAPALSAFRHSKLLEQLSQKVPAVSGLYAEFAHFAEVTGVLTGDEQQVLARLLKYGPSVPVQEPTGRLFLVLPRFGTISPWSSKASDIARNCGLSKIQRLERGIAFYVAGQFSETEAQQIADVLHDRMTQIVLANLEQAAGLFSHAEPKPLTAIDILGGGRAALEKANVELGLALAEDEIDYLVNAFNGLKRNPHDIELMMFAQANSEHCRHKIFNASWDIDGESQEKSLFGMIKNTYQMHSEGVLSAYKDNASVIVGNVAGRFFPDPETRQYGAVQEPVHILMKVETHNHPTAIAPFPGASTGSGGEIRDEGATGRGAKPKAGLTGFTVSNLQIPGFEQPWEVPYGKPERIVNALDIMIEGPLGGAAFNNEFGRPALTGYFRTFEQSITTPHGDEVRGYHKPIMLAGGMGNIREEHVKKGEIVVGSKLVVLGGPAMLIGLGGGAASSMATGTSSADLDFASVQRENPEMERRCQEVIDRCWQLGDKNPISFIHDVGAGGLSNAFPELVNDGDRGGRFELRNIPNDEPGMAPHEIWSNESQERYVLAVGPADFERFKAICERERCPFAVVGEATAEPQLTVTDSHFGNNPVDMPLEVLLGKAPRMHRSVVREAELGDDFDPSNLDIGESIERVLHHPAVASKSFLITIGDRTITGLVARDQMVGPWQVPVADVAVTATSFDVYTGEAMAMGERTPLALLDAPASGRMAIGETITNIAASRINKLSDIKLSANWMSAAGHPGEDARLYDTVKAVGMELCPELGITIPVGKDSMSMATRWNDNGEDKTVTSPMSLIVTGFAPVADIRQTLTPELRMDKGTTDLILIDLGRGQNRMGASILAQVHGKLGKQAPDVDDAEDLKAFFAVIQGLNADGHLLAYHDRSDGGLLTSVMEMAFAGHCGLSLNLDSVAESSAEIAAILFNEELGAVIQVRQDATPDILAQFSAAGLGDCVSVIGQPINNGQINITFNGDTVFEGQRRLLQRQWAETSYQIQRLRDNADCAEQEFDALLEEDNPGLSVKLSYDVNQDIAAPYIKKGIRPQVAVLREQGVNGQVEMAAAFDRAGFNAIDVHMSDILAGRVDLNEFKGLVACGGFSYGDVLGAGEGWAKSALFNSRARDAFQGFFERNDSFTLGVCNGCQMMSNLHELIPGSEFWPHFVRNRSEQFEARVAMVQVQESNSIFLQGMAGSRMPIAIAHGEGHAEFESEEALLEADLSGCVAMRFVDNHGKVTEAYPANPNGSPRGITGLTSRDGRVTIMMPHPERVFRAVQNSWRSEDWNEDAPWMRMFRNARVWVN.

The segment at 301 to 328 (APFPGASTGSGGEIRDEGATGRGAKPKA) is disordered. ATP-binding positions include 305–316 (GASTGSGGEIRD), 384–386 (TGY), and alanine 676. Mg(2+) contacts are provided by aspartate 677, glutamate 716, asparagine 720, and aspartate 884. Serine 886 lines the ATP pocket. A Glutamine amidotransferase type-1 domain is found at 1045–1298 (VAVLREQGVN…MFRNARVWVN (254 aa)). The Nucleophile role is filled by cysteine 1138. Catalysis depends on residues histidine 1263 and glutamate 1265.

In the N-terminal section; belongs to the FGAMS family. Monomer.

Its subcellular location is the cytoplasm. The enzyme catalyses N(2)-formyl-N(1)-(5-phospho-beta-D-ribosyl)glycinamide + L-glutamine + ATP + H2O = 2-formamido-N(1)-(5-O-phospho-beta-D-ribosyl)acetamidine + L-glutamate + ADP + phosphate + H(+). It participates in purine metabolism; IMP biosynthesis via de novo pathway; 5-amino-1-(5-phospho-D-ribosyl)imidazole from N(2)-formyl-N(1)-(5-phospho-D-ribosyl)glycinamide: step 1/2. Functionally, phosphoribosylformylglycinamidine synthase involved in the purines biosynthetic pathway. Catalyzes the ATP-dependent conversion of formylglycinamide ribonucleotide (FGAR) and glutamine to yield formylglycinamidine ribonucleotide (FGAM) and glutamate. The chain is Phosphoribosylformylglycinamidine synthase from Pseudomonas fluorescens (strain Pf0-1).